The primary structure comprises 451 residues: Methylenetetrahydrofolate--tRNA-(uracil-5-)-methyltransferase TrmFO (451 aa).

Position 9–14 (9–14 (GGGMAG)) interacts with FAD.

This sequence belongs to the MnmG family. TrmFO subfamily. Requires FAD as cofactor.

The protein localises to the cytoplasm. It catalyses the reaction uridine(54) in tRNA + (6R)-5,10-methylene-5,6,7,8-tetrahydrofolate + NADH + H(+) = 5-methyluridine(54) in tRNA + (6S)-5,6,7,8-tetrahydrofolate + NAD(+). The catalysed reaction is uridine(54) in tRNA + (6R)-5,10-methylene-5,6,7,8-tetrahydrofolate + NADPH + H(+) = 5-methyluridine(54) in tRNA + (6S)-5,6,7,8-tetrahydrofolate + NADP(+). Functionally, catalyzes the folate-dependent formation of 5-methyl-uridine at position 54 (M-5-U54) in all tRNAs. This is Methylenetetrahydrofolate--tRNA-(uracil-5-)-methyltransferase TrmFO from Dinoroseobacter shibae (strain DSM 16493 / NCIMB 14021 / DFL 12).